The primary structure comprises 758 residues: Relaxin receptor 1 (758 aa).

Topologically, residues 1–409 are extracellular; it reads MTSGPFFFCI…ENLLASIIQR (409 aa). The LDL-receptor class A domain occupies 26–63; it reads SCPLGSFPCGNMSRCLPQLLHCNGVDDCGNRADEDHCG. 3 disulfide bridges follow: C27-C40, C34-C53, and C47-C62. N36 carries N-linked (GlcNAc...) asparagine glycosylation. 6 residues coordinate Ca(2+): L45, N48, V50, D52, D58, and E59. Residue N127 is glycosylated (N-linked (GlcNAc...) asparagine). LRR repeat units follow at residues 127–148, 151–172, 175–196, 199–220, 223–244, 248–269, 272–293, 296–317, 320–341, and 344–365; these read NVTV…GFRK, ELQK…AFRG, SLTK…VFED, RLEW…TFYG, SLIL…PLCQ, RLHW…TFIS, NLTV…AFTH, KLDE…IFKD, ELSQ…QFDC, and KLKS…MFRP. N264 and N272 each carry an N-linked (GlcNAc...) asparagine glycan. A glycan (N-linked (GlcNAc...) asparagine) is linked at N325. The N-linked (GlcNAc...) asparagine glycan is linked to N368. Residues 410–430 form a helical membrane-spanning segment; the sequence is VFVWVVSAITCFGNIFVICMR. Topologically, residues 431–443 are cytoplasmic; it reads PYIRSENKLHAMS. Residues 444-464 form a helical membrane-spanning segment; it reads IISLCCADCLMGVYLFVIGAF. Residues 465 to 486 are Extracellular-facing; it reads DLKFRGEYNKHAQPWMESVHCQ. Cysteines 485 and 563 form a disulfide. The helical transmembrane segment at 487-507 threads the bilayer; that stretch reads FMGSLAILSTEVSVLLLTFLT. Topologically, residues 508-527 are cytoplasmic; that stretch reads LEKYICIVYPFRCLRPRKCR. A helical transmembrane segment spans residues 528–548; that stretch reads TITVLIFIWIIGFIVAFAPLG. The Extracellular segment spans residues 549–577; the sequence is NKEFFKNYYGTNGVCFPLHSEDTGSTGAQ. The chain crosses the membrane as a helical span at residues 578-598; the sequence is IYSVVIFLGINLVAFIIIVFS. Residues 599-629 lie on the Cytoplasmic side of the membrane; the sequence is YGSMFYSVHQSSVTVTEIQKQVKKEVVLAKR. A helical transmembrane segment spans residues 630 to 650; sequence FFFIVFTDALCWIPIFILKFL. Position 651 (S651) is a topological domain, extracellular. A helical transmembrane segment spans residues 652 to 672; sequence LLQVEIPDSITSWVVIFILPI. The Cytoplasmic portion of the chain corresponds to 673-758; sequence NSALNPIIYT…SQSSRLNSYS (86 aa).

It belongs to the G-protein coupled receptor 1 family. As to quaternary structure, interacts with C1QTNF8.

The protein resides in the cell membrane. Its function is as follows. Receptor for relaxins. The activity of this receptor is mediated by G proteins leading to stimulation of adenylate cyclase and an increase of cAMP. Binding of the ligand may also activate a tyrosine kinase pathway that inhibits the activity of a phosphodiesterase that degrades cAMP. The sequence is that of Relaxin receptor 1 (Rxfp1) from Mus musculus (Mouse).